The primary structure comprises 766 residues: Lanosterol synthase ERG7 (766 aa).

The disordered stretch occupies residues 1–47; that stretch reads MVANSTGRDASALKSRKRAADSESEPLLKQGQPFPKQPRIGSELDKT. Residues 148–190 form a PFTB 1 repeat; sequence ATAIYNYISARAHPEDGGWGLHIEGESSVFGTLMNYVALRLVG. The Proton donor role is filled by Asp-482. 2 PFTB repeats span residues 586-626 and 635-676; these read IRTA…KHIG and SRRG…VVQT.

The protein belongs to the terpene cyclase/mutase family.

The protein localises to the lipid droplet. Its subcellular location is the endoplasmic reticulum membrane. It catalyses the reaction (S)-2,3-epoxysqualene = lanosterol. It participates in terpene metabolism; lanosterol biosynthesis; lanosterol from farnesyl diphosphate: step 3/3. Its pathway is steroid metabolism; ergosterol biosynthesis. In terms of biological role, lanosterol synthase; part of the third module of ergosterol biosynthesis pathway that includes the late steps of the pathway. ERG7 catalyzes the cyclization of (S)-2,3 oxidosqualene to lanosterol, a reaction that forms the sterol core. The third module or late pathway involves the ergosterol synthesis itself through consecutive reactions that mainly occur in the endoplasmic reticulum (ER) membrane. Firstly, the squalene synthase ERG9 catalyzes the condensation of 2 farnesyl pyrophosphate moieties to form squalene, which is the precursor of all steroids. Squalene synthase is crucial for balancing the incorporation of farnesyl diphosphate (FPP) into sterol and nonsterol isoprene synthesis. Secondly, squalene is converted into lanosterol by the consecutive action of the squalene epoxidase ERG1 and the lanosterol synthase ERG7. Then, the delta(24)-sterol C-methyltransferase ERG6 methylates lanosterol at C-24 to produce eburicol. Eburicol is the substrate of the sterol 14-alpha demethylase encoded by CYP51A, CYP51B and CYP51C, to yield 4,4,24-trimethyl ergosta-8,14,24(28)-trienol. CYP51B encodes the enzyme primarily responsible for sterol 14-alpha-demethylation, and plays an essential role in ascospore formation. CYP51A encodes an additional sterol 14-alpha-demethylase, induced on ergosterol depletion and responsible for the intrinsic variation in azole sensitivity. The third CYP51 isoform, CYP51C, does not encode a sterol 14-alpha-demethylase, but is required for full virulence on host wheat ears. The C-14 reductase ERG24 then reduces the C14=C15 double bond which leads to 4,4-dimethylfecosterol. A sequence of further demethylations at C-4, involving the C-4 demethylation complex containing the C-4 methylsterol oxidases ERG25, the sterol-4-alpha-carboxylate 3-dehydrogenase ERG26 and the 3-keto-steroid reductase ERG27, leads to the production of fecosterol via 4-methylfecosterol. ERG28 has a role as a scaffold to help anchor ERG25, ERG26 and ERG27 to the endoplasmic reticulum. The C-8 sterol isomerase ERG2 then catalyzes the reaction which results in unsaturation at C-7 in the B ring of sterols and thus converts fecosterol to episterol. The sterol-C5-desaturases ERG3A and ERG3BB then catalyze the introduction of a C-5 double bond in the B ring to produce 5-dehydroepisterol. The C-22 sterol desaturases ERG5A and ERG5B further convert 5-dehydroepisterol into ergosta-5,7,22,24(28)-tetraen-3beta-ol by forming the C-22(23) double bond in the sterol side chain. Finally, ergosta-5,7,22,24(28)-tetraen-3beta-ol is substrate of the C-24(28) sterol reductase ERG4 to produce ergosterol. The chain is Lanosterol synthase ERG7 from Gibberella zeae (strain ATCC MYA-4620 / CBS 123657 / FGSC 9075 / NRRL 31084 / PH-1) (Wheat head blight fungus).